Reading from the N-terminus, the 1181-residue chain is Putative primase (1181 aa).

The interval 1141–1181 (RSHSTMVEHDMDDDESTNKKQELEEEDEECIDIDEYNNERF) is disordered. Positions 1163-1181 (LEEEDEECIDIDEYNNERF) are enriched in acidic residues.

The protein belongs to the eukaryotic-type primase small subunit family.

Synthesizes small RNA primers for the Okazaki fragments on both template strands at replication forks during viral DNA synthesis. This Magallana gigas (Pacific oyster) protein is Putative primase.